We begin with the raw amino-acid sequence, 341 residues long: HTH-type transcriptional repressor PurR (341 aa).

The region spanning 2–56 (ATIKDVAKRANVSTTTVSHVINKTRFVAEETRNAVWAAIKELHYSPSAVARSLKV) is the HTH lacI-type domain. The H-T-H motif DNA-binding region spans 4–23 (IKDVAKRANVSTTTVSHVIN). A DNA-binding region spans residues 48–56 (SAVARSLKV). Residues Y73, R190, T192, F221, and D275 each contribute to the hypoxanthine site.

Homodimer.

The protein operates within purine metabolism; purine nucleotide biosynthesis [regulation]. Its function is as follows. Is the main repressor of the genes involved in the de novo synthesis of purine nucleotides, regulating purB, purC, purEK, purF, purHD, purL, purMN and guaBA expression. PurR is allosterically activated to bind its cognate DNA by binding the purine corepressors, hypoxanthine or guanine, thereby effecting transcription repression. This is HTH-type transcriptional repressor PurR from Klebsiella pneumoniae (strain 342).